The primary structure comprises 273 residues: Putative pyruvate, phosphate dikinase regulatory protein (273 aa).

153-160 lines the ADP pocket; that stretch reads GISRTSKT.

This sequence belongs to the pyruvate, phosphate/water dikinase regulatory protein family. PDRP subfamily.

It catalyses the reaction N(tele)-phospho-L-histidyl/L-threonyl-[pyruvate, phosphate dikinase] + ADP = N(tele)-phospho-L-histidyl/O-phospho-L-threonyl-[pyruvate, phosphate dikinase] + AMP + H(+). The enzyme catalyses N(tele)-phospho-L-histidyl/O-phospho-L-threonyl-[pyruvate, phosphate dikinase] + phosphate + H(+) = N(tele)-phospho-L-histidyl/L-threonyl-[pyruvate, phosphate dikinase] + diphosphate. In terms of biological role, bifunctional serine/threonine kinase and phosphorylase involved in the regulation of the pyruvate, phosphate dikinase (PPDK) by catalyzing its phosphorylation/dephosphorylation. In Rhizobium etli (strain ATCC 51251 / DSM 11541 / JCM 21823 / NBRC 15573 / CFN 42), this protein is Putative pyruvate, phosphate dikinase regulatory protein.